The chain runs to 165 residues: MAATATSKITLTSSDGVEITIERQVAERSILIKNMLEDLGDSGEAIPIPNVNESVLKKVIEWCKHHKGDPPSTGDDDVDSRRKTTDIDEWDQKFMQVDQEMLFEIILAANYLDIKALLDVGCKTVANMIKGKSPEEIRKTFNIQNDFTPEEEDQIRRENEWAEDR.

Residues 106 to 165 (ILAANYLDIKALLDVGCKTVANMIKGKSPEEIRKTFNIQNDFTPEEEDQIRRENEWAEDR) form an interaction with the F-box domain of F-box proteins region.

Belongs to the SKP1 family. In terms of assembly, component of the SCF (SKP1-CUL1-F-box protein) E3 ubiquitin ligase complexes.

The protein operates within protein modification; protein ubiquitination. Functionally, essential component of the SCF (SKP1-CUL1-F-box protein) E3 ubiquitin ligase complexes, which mediate the ubiquitination and subsequent proteasomal degradation of target proteins. Controls sulfur metabolite repression, probably by mediating the inactivation or degradation of the metR transcription factor. This Arthroderma otae (strain ATCC MYA-4605 / CBS 113480) (Microsporum canis) protein is E3 ubiquitin ligase complex SCF subunit sconC (sconC).